The primary structure comprises 258 residues: Thiazole synthase (258 aa).

Lysine 100 (schiff-base intermediate with DXP) is an active-site residue. 1-deoxy-D-xylulose 5-phosphate-binding positions include glycine 161, 187–188 (AG), and 209–210 (NT).

The protein belongs to the ThiG family. As to quaternary structure, homotetramer. Forms heterodimers with either ThiH or ThiS.

It is found in the cytoplasm. The catalysed reaction is [ThiS sulfur-carrier protein]-C-terminal-Gly-aminoethanethioate + 2-iminoacetate + 1-deoxy-D-xylulose 5-phosphate = [ThiS sulfur-carrier protein]-C-terminal Gly-Gly + 2-[(2R,5Z)-2-carboxy-4-methylthiazol-5(2H)-ylidene]ethyl phosphate + 2 H2O + H(+). The protein operates within cofactor biosynthesis; thiamine diphosphate biosynthesis. Catalyzes the rearrangement of 1-deoxy-D-xylulose 5-phosphate (DXP) to produce the thiazole phosphate moiety of thiamine. Sulfur is provided by the thiocarboxylate moiety of the carrier protein ThiS. In vitro, sulfur can be provided by H(2)S. The polypeptide is Thiazole synthase (Campylobacter jejuni (strain RM1221)).